The primary structure comprises 187 residues: Probable chemoreceptor glutamine deamidase CheD 1 (187 aa).

This sequence belongs to the CheD family.

The enzyme catalyses L-glutaminyl-[protein] + H2O = L-glutamyl-[protein] + NH4(+). Probably deamidates glutamine residues to glutamate on methyl-accepting chemotaxis receptors (MCPs), playing an important role in chemotaxis. This is Probable chemoreceptor glutamine deamidase CheD 1 from Ruegeria sp. (strain TM1040) (Silicibacter sp.).